Reading from the N-terminus, the 285-residue chain is uncharacterized protein (285 aa).

It belongs to the methyltransferase superfamily.

This is an uncharacterized protein from Mycobacterium tuberculosis (strain CDC 1551 / Oshkosh).